The chain runs to 168 residues: Photosystem I assembly protein Ycf3 (168 aa).

TPR repeat units lie at residues Ala35–Pro68, Ser72–Leu105, and Gly120–Asn153.

It belongs to the Ycf3 family.

It localises to the plastid. Its subcellular location is the chloroplast thylakoid membrane. In terms of biological role, essential for the assembly of the photosystem I (PSI) complex. May act as a chaperone-like factor to guide the assembly of the PSI subunits. This is Photosystem I assembly protein Ycf3 from Piper cenocladum (Ant piper).